Reading from the N-terminus, the 120-residue chain is CLAVATA3/ESR (CLE)-related protein 9 (120 aa).

The N-terminal stretch at 1-26 is a signal peptide; that stretch reads MTMTHLNRLILISLLFVSLLLKSSTA. N-linked (GlcNAc...) asparagine glycosylation occurs at Asn-35. Residues 85-120 are disordered; the sequence is RSSRKQPLLSPPPPEIDPRYGVDKRLVPSGPNPLHN. Positions 100–110 are enriched in basic and acidic residues; sequence IDPRYGVDKRL. Hydroxyproline is present on residues Pro-112 and Pro-115. Residue Pro-115 is glycosylated (O-linked (Ara...) hydroxyproline).

It belongs to the CLV3/ESR signal peptide family. Post-translationally, the O-glycosylation (arabinosylation) of the hydroxyproline Pro-115 enhances binding affinity of the CLE9p peptide for its receptor. As to expression, mostly expressed in leaves, flowers, stems and apex, and, to a lower extent, in seedlings, roots, siliques and pollen.

Its subcellular location is the secreted. The protein resides in the extracellular space. Its function is as follows. Extracellular signal peptide that regulates cell fate. Represses root apical meristem maintenance. Regulates the transition of protophloem cells from proliferation to differentiation, thus impinging on postembryonic growth capacity of the root meristem; this signaling pathway requires CRN and CLV2. This is CLAVATA3/ESR (CLE)-related protein 9 from Arabidopsis thaliana (Mouse-ear cress).